A 363-amino-acid polypeptide reads, in one-letter code: Dual-specificity RNA methyltransferase RlmN (363 aa).

Catalysis depends on glutamate 102, which acts as the Proton acceptor. The Radical SAM core domain occupies 108 to 349 (EKKRATLCVS…KNRGQDIGAA (242 aa)). Cysteine 115 and cysteine 350 are joined by a disulfide. Cysteine 122, cysteine 126, and cysteine 129 together coordinate [4Fe-4S] cluster. S-adenosyl-L-methionine contacts are provided by residues 174–175 (GE), serine 206, 228–230 (SLH), and asparagine 307. Cysteine 350 functions as the S-methylcysteine intermediate in the catalytic mechanism.

It belongs to the radical SAM superfamily. RlmN family. It depends on [4Fe-4S] cluster as a cofactor.

Its subcellular location is the cytoplasm. It carries out the reaction adenosine(2503) in 23S rRNA + 2 reduced [2Fe-2S]-[ferredoxin] + 2 S-adenosyl-L-methionine = 2-methyladenosine(2503) in 23S rRNA + 5'-deoxyadenosine + L-methionine + 2 oxidized [2Fe-2S]-[ferredoxin] + S-adenosyl-L-homocysteine. It catalyses the reaction adenosine(37) in tRNA + 2 reduced [2Fe-2S]-[ferredoxin] + 2 S-adenosyl-L-methionine = 2-methyladenosine(37) in tRNA + 5'-deoxyadenosine + L-methionine + 2 oxidized [2Fe-2S]-[ferredoxin] + S-adenosyl-L-homocysteine. In terms of biological role, specifically methylates position 2 of adenine 2503 in 23S rRNA and position 2 of adenine 37 in tRNAs. m2A2503 modification seems to play a crucial role in the proofreading step occurring at the peptidyl transferase center and thus would serve to optimize ribosomal fidelity. This Buchnera aphidicola subsp. Schizaphis graminum (strain Sg) protein is Dual-specificity RNA methyltransferase RlmN.